The chain runs to 1196 residues: DNA-directed RNA polymerase subunit beta (1196 aa).

This sequence belongs to the RNA polymerase beta chain family. As to quaternary structure, the RNAP catalytic core consists of 2 alpha, 1 beta, 1 beta' and 1 omega subunit. When a sigma factor is associated with the core the holoenzyme is formed, which can initiate transcription.

It carries out the reaction RNA(n) + a ribonucleoside 5'-triphosphate = RNA(n+1) + diphosphate. In terms of biological role, DNA-dependent RNA polymerase catalyzes the transcription of DNA into RNA using the four ribonucleoside triphosphates as substrates. The chain is DNA-directed RNA polymerase subunit beta from Lactococcus lactis subsp. cremoris (strain SK11).